Here is a 156-residue protein sequence, read N- to C-terminus: Photosystem I reaction center subunit XI (156 aa).

2 consecutive transmembrane segments (helical) span residues 75-95 (GGLL…SLYA) and 128-148 (FFIG…ALYF).

It belongs to the PsaL family.

The protein resides in the cellular thylakoid membrane. The polypeptide is Photosystem I reaction center subunit XI (Crocosphaera subtropica (strain ATCC 51142 / BH68) (Cyanothece sp. (strain ATCC 51142))).